The sequence spans 606 residues: Scavenger receptor class A member 3 (606 aa).

Topologically, residues 1 to 56 are cytoplasmic; it reads MKVRSAGSDRDVLCVTEEDLAGEDEDMPSFPCTQEGRAGPRCNRCQKNLSLHTSVR. Residues 57–77 form a helical; Signal-anchor for type II membrane protein membrane-spanning segment; sequence ILYLFLTLLLVAVAVLASLVF. Residues 78–606 are Extracellular-facing; sequence RKVDSLSEDI…PGPPGNQSPY (529 aa). N-linked (GlcNAc...) asparagine glycans are attached at residues asparagine 115, asparagine 182, asparagine 224, asparagine 257, asparagine 313, asparagine 337, asparagine 365, asparagine 400, asparagine 430, and asparagine 451. The interval 455 to 606 is disordered; it reads IRGVPGPPGP…PGPPGNQSPY (152 aa). 2 Collagen-like domains span residues 456–558 and 559–601; these read RGVP…PGPS and GPQG…GPPG. A compositionally biased stretch (low complexity) spans 497–516; it reads PQGQPGEPGPVGERGPAGPR. The segment covering 526–535 has biased composition (gly residues); that stretch reads GSFGTGGPRG. 2 stretches are compositionally biased toward pro residues: residues 548 to 558 and 591 to 606; these read PEGPPGSPGPS and PGLP…QSPY.

It localises to the endoplasmic reticulum membrane. It is found in the golgi apparatus membrane. In terms of biological role, seems to protect cells by scavenging oxidative molecules or harmful products of oxidation. This is Scavenger receptor class A member 3 (Scara3) from Mus musculus (Mouse).